The chain runs to 51 residues: Defensin-like protein 1 (51 aa).

Residue Q1 is modified to Pyrrolidone carboxylic acid. 4 disulfide bridges follow: C4/C51, C15/C36, C21/C45, and C25/C47.

In terms of assembly, forms oligomers in its native state.

Possesses antifungal activity sensitive to inorganic cations. This is Defensin-like protein 1 from Sinapis alba (White mustard).